Here is a 77-residue protein sequence, read N- to C-terminus: Putative antitoxin VapB3 (77 aa).

A coiled-coil region spans residues 10 to 60 (RRGLKKELEELGINYAEAVRKFLEELVARERRRRALERARALREELRKKGA).

Forms a complex with putative toxin VapC3, possibly VapB(2)-VapC(2).

Antitoxin component of a type II toxin-antitoxin (TA) system. The chain is Putative antitoxin VapB3 (vAPb3) from Pyrobaculum aerophilum (strain ATCC 51768 / DSM 7523 / JCM 9630 / CIP 104966 / NBRC 100827 / IM2).